Here is an 863-residue protein sequence, read N- to C-terminus: Bifunctional uridylyltransferase/uridylyl-removing enzyme (863 aa).

Residues 1–328 (MLFPLSLSSP…SSNQATVIEQ (328 aa)) form a uridylyltransferase region. The uridylyl-removing stretch occupies residues 329 to 687 (LDDDFQLINQ…ISNRFSLGGT (359 aa)). The HD domain occupies 446–568 (VDEHTLRVML…VQNQVRLDYL (123 aa)). ACT domains follow at residues 688–772 (EVFI…PNRQ) and 794–863 (EMEL…RNIG).

The protein belongs to the GlnD family. Requires Mg(2+) as cofactor.

It carries out the reaction [protein-PII]-L-tyrosine + UTP = [protein-PII]-uridylyl-L-tyrosine + diphosphate. It catalyses the reaction [protein-PII]-uridylyl-L-tyrosine + H2O = [protein-PII]-L-tyrosine + UMP + H(+). With respect to regulation, uridylyltransferase (UTase) activity is inhibited by glutamine, while glutamine activates uridylyl-removing (UR) activity. Its function is as follows. Modifies, by uridylylation and deuridylylation, the PII regulatory proteins (GlnB and homologs), in response to the nitrogen status of the cell that GlnD senses through the glutamine level. Under low glutamine levels, catalyzes the conversion of the PII proteins and UTP to PII-UMP and PPi, while under higher glutamine levels, GlnD hydrolyzes PII-UMP to PII and UMP (deuridylylation). Thus, controls uridylylation state and activity of the PII proteins, and plays an important role in the regulation of nitrogen assimilation and metabolism. This Haemophilus influenzae (strain PittEE) protein is Bifunctional uridylyltransferase/uridylyl-removing enzyme.